We begin with the raw amino-acid sequence, 53 residues long: UPF0391 membrane protein YtjA (53 aa).

2 helical membrane-spanning segments follow: residues 4-24 (WGIIFLVIALIAAALGFGGLA) and 30-48 (AAKIVFVVGIVLFLVSLFM).

It belongs to the UPF0391 family.

It is found in the cell membrane. This Salmonella agona (strain SL483) protein is UPF0391 membrane protein YtjA.